We begin with the raw amino-acid sequence, 292 residues long: Acetyl-coenzyme A carboxylase carboxyl transferase subunit beta (292 aa).

The 257-residue stretch at 36–292 folds into the CoA carboxyltransferase N-terminal domain; it reads MWSKCEKCAK…LLRMHEVDYE (257 aa). The Zn(2+) site is built by C40, C43, C59, and C62. The segment at 40–62 adopts a C4-type zinc-finger fold; sequence CEKCAKILYTEDLRENFNVCPNC.

Belongs to the AccD/PCCB family. Acetyl-CoA carboxylase is a heterohexamer composed of biotin carboxyl carrier protein (AccB), biotin carboxylase (AccC) and two subunits each of ACCase subunit alpha (AccA) and ACCase subunit beta (AccD). The cofactor is Zn(2+).

The protein resides in the cytoplasm. The catalysed reaction is N(6)-carboxybiotinyl-L-lysyl-[protein] + acetyl-CoA = N(6)-biotinyl-L-lysyl-[protein] + malonyl-CoA. The protein operates within lipid metabolism; malonyl-CoA biosynthesis; malonyl-CoA from acetyl-CoA: step 1/1. Component of the acetyl coenzyme A carboxylase (ACC) complex. Biotin carboxylase (BC) catalyzes the carboxylation of biotin on its carrier protein (BCCP) and then the CO(2) group is transferred by the transcarboxylase to acetyl-CoA to form malonyl-CoA. In Clostridium perfringens (strain 13 / Type A), this protein is Acetyl-coenzyme A carboxylase carboxyl transferase subunit beta.